Reading from the N-terminus, the 137-residue chain is Large ribosomal subunit protein uL16 (137 aa).

This sequence belongs to the universal ribosomal protein uL16 family. Part of the 50S ribosomal subunit.

In terms of biological role, binds 23S rRNA and is also seen to make contacts with the A and possibly P site tRNAs. This chain is Large ribosomal subunit protein uL16, found in Xanthobacter autotrophicus (strain ATCC BAA-1158 / Py2).